The primary structure comprises 396 residues: MTINPVSRKVAWLRVVTLAIAAFIFNTTEFVPVGLLSDIAESFHMQTAQVGIMLTIYAWVVAVMSLPFMLLTSQMERRKLLICLFVLFIASHVLSFLAWNFTVLVISRIGIAFAHAIFWSITASLAIRLAPAGKRAQALSLIATGTALAMVLGLPIGRVVGQYFGWRTTFFAIGMGALITLLCLIKLLPKLPSEHSGSLKSLPLLFRRPALMSLYVLTVVVVTAHYTAYSYIEPFVQNVAGLSANFATVLLLILGGAGIIGSLVFGKLGNRHASSLVSIAIALLVVCLLLLLPAADSEAHLAILSIFWGIAIMVIGLGMQVKVLALAPDATDVAMALFSGIFNIGIGAGALVGNQVSLHWSMSAIGYIGDIPACAALVWAVLIFRKWPVTLEEQPH.

The next 12 membrane-spanning stretches (helical) occupy residues 15-35 (VVTL…PVGL), 50-70 (VGIM…PFML), 81-101 (LICL…AWNF), 103-123 (VLVI…SITA), 136-156 (AQAL…GLPI), 169-189 (TFFA…KLLP), 209-229 (PALM…YTAY), 246-266 (FATV…LVFG), 275-295 (SLVS…LPAA), 301-321 (LAIL…GMQV), 333-353 (VAMA…ALVG), and 364-384 (AIGY…VLIF).

The protein belongs to the major facilitator superfamily. SotB (TC 2.A.1.2) family.

The protein localises to the cell inner membrane. In terms of biological role, involved in the efflux of sugars. The physiological role may be the reduction of the intracellular concentration of toxic sugars or sugar metabolites. This chain is Probable sugar efflux transporter, found in Salmonella paratyphi C (strain RKS4594).